Consider the following 345-residue polypeptide: Phosphoribosylformylglycinamidine cyclo-ligase (345 aa).

This sequence belongs to the AIR synthase family.

It is found in the cytoplasm. The catalysed reaction is 2-formamido-N(1)-(5-O-phospho-beta-D-ribosyl)acetamidine + ATP = 5-amino-1-(5-phospho-beta-D-ribosyl)imidazole + ADP + phosphate + H(+). It participates in purine metabolism; IMP biosynthesis via de novo pathway; 5-amino-1-(5-phospho-D-ribosyl)imidazole from N(2)-formyl-N(1)-(5-phospho-D-ribosyl)glycinamide: step 2/2. The chain is Phosphoribosylformylglycinamidine cyclo-ligase from Escherichia coli O45:K1 (strain S88 / ExPEC).